Reading from the N-terminus, the 216-residue chain is Regulator of G-protein signaling 19 (216 aa).

Positions 1 to 19 are enriched in basic and acidic residues; it reads MPTPHEAEKQHTGPEEADR. Positions 1–30 are disordered; sequence MPTPHEAEKQHTGPEEADRPPSMSSHDAAP. Ser24 bears the Phosphoserine; by CK2 mark. The 117-residue stretch at 90–206 folds into the RGS domain; sequence SFDKLMHSPT…LTSPTYRSLL (117 aa). Phosphoserine is present on Ser97. The residue at position 151 (Ser151) is a Phosphoserine; by MAPK1 and MAPK3. The segment at 207–216 is interaction with GIPC; the sequence is LQGAPQSSEA.

In terms of assembly, interacts with GIPC PDZ domain. Interacts with GNAO1. Fatty acylated. Heavily palmitoylated in the cysteine string motif. Post-translationally, phosphorylated, mainly on serine residues.

Its subcellular location is the membrane. Functionally, inhibits signal transduction by increasing the GTPase activity of G protein alpha subunits thereby driving them into their inactive GDP-bound form. Binds to G-alpha subfamily 1 members, predominantly to G(i)-alpha-3. Activity on G(z)-alpha is inhibited by phosphorylation and palmitoylation of the G-protein. The polypeptide is Regulator of G-protein signaling 19 (Rgs19) (Rattus norvegicus (Rat)).